A 738-amino-acid polypeptide reads, in one-letter code: Eukaryotic translation initiation factor 3 subunit B (738 aa).

Residues 1–120 form a sufficient for interaction with HCR1 and TIF32 region; sequence MCGCVGVISN…LFIQFKTAQM (120 aa). The interval 1–245 is sufficient for interaction with PIC8; sequence MCGCVGVISN…GIQSWGGAQF (245 aa). The 88-residue stretch at 59–146 folds into the RRM domain; sequence NFVVVDGAPI…HRLLVNKLSD (88 aa). 4 WD repeats span residues 211–250, 322–360, 363–406, and 537–579; these read PRKG…SISK, QKEM…LLDK, VKID…QTAR, and VVDK…ENVR.

The protein belongs to the eIF-3 subunit B family. In terms of assembly, component of the eukaryotic translation initiation factor 3 (eIF-3) complex.

The protein resides in the cytoplasm. Its function is as follows. RNA-binding component of the eukaryotic translation initiation factor 3 (eIF-3) complex, which is involved in protein synthesis of a specialized repertoire of mRNAs and, together with other initiation factors, stimulates binding of mRNA and methionyl-tRNAi to the 40S ribosome. The eIF-3 complex specifically targets and initiates translation of a subset of mRNAs involved in cell proliferation. The sequence is that of Eukaryotic translation initiation factor 3 subunit B from Meyerozyma guilliermondii (strain ATCC 6260 / CBS 566 / DSM 6381 / JCM 1539 / NBRC 10279 / NRRL Y-324) (Yeast).